Here is a 524-residue protein sequence, read N- to C-terminus: Bifunctional purine biosynthesis protein PurH (524 aa).

One can recognise an MGS-like domain in the interval 1–145; that stretch reads MIKQALLSVS…KNHRDVTVIV (145 aa).

Belongs to the PurH family.

It carries out the reaction (6R)-10-formyltetrahydrofolate + 5-amino-1-(5-phospho-beta-D-ribosyl)imidazole-4-carboxamide = 5-formamido-1-(5-phospho-D-ribosyl)imidazole-4-carboxamide + (6S)-5,6,7,8-tetrahydrofolate. The enzyme catalyses IMP + H2O = 5-formamido-1-(5-phospho-D-ribosyl)imidazole-4-carboxamide. It participates in purine metabolism; IMP biosynthesis via de novo pathway; 5-formamido-1-(5-phospho-D-ribosyl)imidazole-4-carboxamide from 5-amino-1-(5-phospho-D-ribosyl)imidazole-4-carboxamide (10-formyl THF route): step 1/1. Its pathway is purine metabolism; IMP biosynthesis via de novo pathway; IMP from 5-formamido-1-(5-phospho-D-ribosyl)imidazole-4-carboxamide: step 1/1. In Cupriavidus necator (strain ATCC 17699 / DSM 428 / KCTC 22496 / NCIMB 10442 / H16 / Stanier 337) (Ralstonia eutropha), this protein is Bifunctional purine biosynthesis protein PurH.